Here is a 56-residue protein sequence, read N- to C-terminus: Large ribosomal subunit protein bL32 (56 aa).

Positions Met-1–Gly-34 are disordered. The span at Lys-7–Arg-16 shows a compositional bias: basic residues. The span at Ser-21–Ala-31 shows a compositional bias: polar residues.

This sequence belongs to the bacterial ribosomal protein bL32 family.

This chain is Large ribosomal subunit protein bL32, found in Shewanella frigidimarina (strain NCIMB 400).